The sequence spans 257 residues: MLNLYGHKFSSRLMLGTAQYPSPAILRDAIHKSNTEIVTVSLRRETAGGKQGGQFWQFLKELDITVLPNTAGCYTVKEAVTTAKLARDLFKTSWIKLEIIGNPDTLQPNVFSLVEAAKILNSEGFKIFAYTTDDLIVAEKLLDVGCQVIMPWCAPIGSAKGPHNTDGLRSIRAYLPDVTLVIDAGIGRPSHATVAMELGYDAVLLNTAVAKAADPVLMAEAFSKAIQAGRMGYKAGILEARNVAVPSTPIIGKAVFS.

Lys-96 acts as the Schiff-base intermediate with DXP in catalysis. Residues Gly-157, 184 to 185 (AG), and 206 to 207 (NT) contribute to the 1-deoxy-D-xylulose 5-phosphate site.

This sequence belongs to the ThiG family. In terms of assembly, homotetramer. Forms heterodimers with either ThiH or ThiS.

Its subcellular location is the cytoplasm. It carries out the reaction [ThiS sulfur-carrier protein]-C-terminal-Gly-aminoethanethioate + 2-iminoacetate + 1-deoxy-D-xylulose 5-phosphate = [ThiS sulfur-carrier protein]-C-terminal Gly-Gly + 2-[(2R,5Z)-2-carboxy-4-methylthiazol-5(2H)-ylidene]ethyl phosphate + 2 H2O + H(+). Its pathway is cofactor biosynthesis; thiamine diphosphate biosynthesis. Catalyzes the rearrangement of 1-deoxy-D-xylulose 5-phosphate (DXP) to produce the thiazole phosphate moiety of thiamine. Sulfur is provided by the thiocarboxylate moiety of the carrier protein ThiS. In vitro, sulfur can be provided by H(2)S. This chain is Thiazole synthase, found in Bartonella henselae (strain ATCC 49882 / DSM 28221 / CCUG 30454 / Houston 1) (Rochalimaea henselae).